The chain runs to 201 residues: Probable GTP-binding protein EngB (201 aa).

Positions 25 to 199 (HGIEIAFIGY…KSKLNFWYEK (175 aa)) constitute an EngB-type G domain. Residues 33-40 (GYSNSGKS), 60-64 (GRTQL), 78-81 (DLPG), 145-148 (TKCD), and 178-180 (FSS) contribute to the GTP site. 2 residues coordinate Mg(2+): Ser-40 and Thr-62.

Belongs to the TRAFAC class TrmE-Era-EngA-EngB-Septin-like GTPase superfamily. EngB GTPase family. The cofactor is Mg(2+).

Functionally, necessary for normal cell division and for the maintenance of normal septation. In Buchnera aphidicola subsp. Schizaphis graminum (strain Sg), this protein is Probable GTP-binding protein EngB.